A 306-amino-acid chain; its full sequence is Pyridoxal 5'-phosphate synthase subunit PdxS (306 aa).

Residue Asp-36 participates in D-ribose 5-phosphate binding. The active-site Schiff-base intermediate with D-ribose 5-phosphate is Lys-93. D-ribose 5-phosphate is bound at residue Gly-165. Arg-177 contributes to the D-glyceraldehyde 3-phosphate binding site. Residues Gly-226 and 247-248 (GS) contribute to the D-ribose 5-phosphate site.

This sequence belongs to the PdxS/SNZ family. As to quaternary structure, in the presence of PdxT, forms a dodecamer of heterodimers.

The catalysed reaction is aldehydo-D-ribose 5-phosphate + D-glyceraldehyde 3-phosphate + L-glutamine = pyridoxal 5'-phosphate + L-glutamate + phosphate + 3 H2O + H(+). Its pathway is cofactor biosynthesis; pyridoxal 5'-phosphate biosynthesis. Its function is as follows. Catalyzes the formation of pyridoxal 5'-phosphate from ribose 5-phosphate (RBP), glyceraldehyde 3-phosphate (G3P) and ammonia. The ammonia is provided by the PdxT subunit. Can also use ribulose 5-phosphate and dihydroxyacetone phosphate as substrates, resulting from enzyme-catalyzed isomerization of RBP and G3P, respectively. In Salinispora arenicola (strain CNS-205), this protein is Pyridoxal 5'-phosphate synthase subunit PdxS.